A 395-amino-acid polypeptide reads, in one-letter code: Probable nitrate/nitrite transporter NarK2 (395 aa).

The next 12 helical transmembrane spans lie at 8 to 28 (LVLA…IGPL), 45 to 65 (LLVA…GPLT), 72 to 92 (AMLI…GVAA), 98 to 118 (ALLV…AVGI), 131 to 151 (GFST…AFFT), 157 to 177 (WFGL…TAVV), 205 to 225 (LPVT…FVAF), 244 to 266 (AGAR…GWLS), 274 to 294 (VVLA…LQPP), 301 to 321 (ATFI…FAWV), 333 to 353 (VTGI…LVMG), and 365 to 385 (VGLL…ALHA).

The protein belongs to the major facilitator superfamily. Nitrate/nitrite porter (TC 2.A.1.8) family.

It localises to the cell membrane. Involved in excretion of nitrite produced by the dissimilatory reduction of nitrate. The polypeptide is Probable nitrate/nitrite transporter NarK2 (narK2) (Mycobacterium tuberculosis (strain CDC 1551 / Oshkosh)).